The primary structure comprises 440 residues: Xylose isomerase (440 aa).

Residues Asp307 and Asp309 each contribute to the Mg(2+) site.

Belongs to the xylose isomerase family. Homotetramer. Mg(2+) serves as cofactor.

It is found in the cytoplasm. It catalyses the reaction alpha-D-xylose = alpha-D-xylulofuranose. This chain is Xylose isomerase, found in Escherichia coli (strain K12 / MC4100 / BW2952).